The chain runs to 383 residues: MDRKEMISMILAGGQGSRLGILTKKLAKPAVPFGGKYRIIDFVLSNCSNSGIYTVGVLTQYKPLELNSHIGIGTPWDLDRRDGGVYVLPPYQEESGGNWYKGTADAIYQNISFVDNYNPEYVIILSGDHIYKMNYANMLKFHKEKKADVTIAVIEVPIEETYRFGIVNTKSDMEIYEFQEKPMKAKSTKASMGVYIFKWTLLKRFLKADQSDKNSSNDFGKNIIPNMLNSGIKMYAYPFRGYWKDVGTIQSLWEANMDLLKEDNELNLGDLNWRIYSVNHVEPAQYIGPKANIKSSIAVNGCEIYGEVKNSIISSGSIIGKNSKIIDSVIMPYSKIGDNVIINKALVGSNVVVRKNSIIGDGREITVIGSNKDIKAESLLVSS.

Alpha-D-glucose 1-phosphate-binding positions include Tyr-100, Gly-165, 180-181 (EK), and Ser-191.

It belongs to the bacterial/plant glucose-1-phosphate adenylyltransferase family. In terms of assembly, homotetramer.

The catalysed reaction is alpha-D-glucose 1-phosphate + ATP + H(+) = ADP-alpha-D-glucose + diphosphate. Its pathway is glycan biosynthesis; glycogen biosynthesis. Involved in the biosynthesis of ADP-glucose, a building block required for the elongation reactions to produce glycogen. Catalyzes the reaction between ATP and alpha-D-glucose 1-phosphate (G1P) to produce pyrophosphate and ADP-Glc. This is Glucose-1-phosphate adenylyltransferase from Clostridium kluyveri (strain ATCC 8527 / DSM 555 / NBRC 12016 / NCIMB 10680 / K1).